A 326-amino-acid polypeptide reads, in one-letter code: Transcription cofactor vestigial-like protein 3 (326 aa).

A disordered region spans residues 57–80; the sequence is VTLPSKQEEEDEEEEEEEKDQPAE. K62 is covalently cross-linked (Glycyl lysine isopeptide (Lys-Gly) (interchain with G-Cter in SUMO2)). The span at 64-75 shows a compositional bias: acidic residues; sequence EEEDEEEEEEEK. A Glycyl lysine isopeptide (Lys-Gly) (interchain with G-Cter in SUMO2) cross-link involves residue K126. 2 disordered regions span residues 175-203 and 233-256; these read PPGTFSAADPSPWPGHNLHQTGPAPPPAV and HAHMHHRHRHHHHHHHPPAGSALD. A compositionally biased stretch (basic residues) spans 233–249; sequence HAHMHHRHRHHHHHHHP.

Belongs to the vestigial family. Enriched in placenta.

It is found in the nucleus. May act as a specific coactivator for the mammalian TEFs. In Homo sapiens (Human), this protein is Transcription cofactor vestigial-like protein 3 (VGLL3).